Consider the following 563-residue polypeptide: Kdo(2)-lipid A phosphoethanolamine 7''-transferase (563 aa).

The Cytoplasmic segment spans residues 1 to 9 (MRYIKSITQ). The helical transmembrane segment at 10 to 30 (QKLSFLLAIYIGLFMNGAVFY) threads the bilayer. Over 31-48 (RRFGSYAHDFTVWKGISA) the chain is Periplasmic. A helical transmembrane segment spans residues 49-69 (VVELAATVLVTFFLLRLLSLF). At 70 to 79 (GRRSWRILAS) the chain is on the cytoplasmic side. A helical transmembrane segment spans residues 80-100 (LVVLFSAGASYYMTFLNVVIG). Topologically, residues 101 to 117 (YGIIASVMTTDIDLSKE) are periplasmic. The chain crosses the membrane as a helical span at residues 118 to 138 (VVGLNFILWLIAVSALPLILI). The Cytoplasmic portion of the chain corresponds to 139–159 (WNNRCRYTLLRQLRTPGQRIR). A helical membrane pass occupies residues 160 to 180 (SLAVVVLAGIMVWAPIRLLDI). Topologically, residues 181–563 (QQKKVERATG…IPQAKEAAAN (383 aa)) are periplasmic.

This sequence belongs to the phosphoethanolamine transferase family. EptB subfamily. It depends on Ca(2+) as a cofactor.

It localises to the cell inner membrane. The enzyme catalyses alpha-Kdo-(2-&gt;4)-alpha-Kdo-(2-&gt;6)-lipid A (E. coli) + a 1,2-diacyl-sn-glycero-3-phosphoethanolamine = 7-O-[2-aminoethoxy(hydroxy)phosphoryl]-alpha-Kdo-(2-&gt;4)-alpha-Kdo-(2-&gt;6)-lipid A + a 1,2-diacyl-sn-glycerol. The catalysed reaction is alpha-Kdo-(2-&gt;4)-alpha-Kdo-(2-&gt;6)-lipid IVA (E. coli) + a 1,2-diacyl-sn-glycero-3-phosphoethanolamine = 7-O-[2-aminoethoxy(hydroxy)phosphoryl]-alpha-Kdo-(2-&gt;4)-alpha-Kdo-(2-&gt;6)-lipid IVA (E. coli) + a 1,2-diacyl-sn-glycerol. Its activity is regulated as follows. Inhibited by calcium concentrations higher than 1 mM. In terms of biological role, catalyzes the addition of a phosphoethanolamine (pEtN) moiety to the outer 3-deoxy-D-manno-octulosonic acid (Kdo) residue of a Kdo(2)-lipid A. Phosphatidylethanolamines with one unsaturated acyl group function as pEtN donors and the reaction releases diacylglycerol. This Escherichia coli (strain K12) protein is Kdo(2)-lipid A phosphoethanolamine 7''-transferase (eptB).